The sequence spans 496 residues: Probable G-protein coupled receptor Mth-like 5 (496 aa).

At 1 to 219 (MLVKTLGAHF…SNFLLRKILN (219 aa)) the chain is on the extracellular side. Asn82 is a glycosylation site (N-linked (GlcNAc...) asparagine). A helical transmembrane segment spans residues 220–240 (PIFHGISLVILLVIAIIYFIL). The Cytoplasmic portion of the chain corresponds to 241–246 (PTLRDL). The helical transmembrane segment at 247-267 (VGNIVTTIAMCLMVSQAADLV) threads the bilayer. Topologically, residues 268-276 (RIFTELTSH) are extracellular. The helical transmembrane segment at 277 to 297 (VSFIVADIILCFSLLAAFFWL) threads the bilayer. Residues 298–327 (NSFGFYIWKTFRSRNVFLRVTDGRKYCYYS) are Cytoplasmic-facing. Residues 328-348 (AYAWGCTATMAALAVFAHFFL) traverse the membrane as a helical segment. Residues 349-366 (DAESYKQEHMVGEQETIG) lie on the Extracellular side of the membrane. Residues 367–387 (WLGICIFFAPIACTILVNIFF) form a helical membrane-spanning segment. Topologically, residues 388 to 411 (YVTTRKLINRRTVYGRIAHKLKAN) are cytoplasmic. The helical transmembrane segment at 412-432 (FIMFSLMLLVMSIAWLFLIMS) threads the bilayer. At 433–438 (WLQMEG) the chain is on the extracellular side. The chain crosses the membrane as a helical span at residues 439-459 (LLYAHIVVNALQTPLLLYICV). Residues 460–496 (LRQRHVTFLLKKTCCYNEPPSANDWGDELHYMNGNDY) are Cytoplasmic-facing.

The protein belongs to the G-protein coupled receptor 2 family. Mth subfamily.

It is found in the cell membrane. In Drosophila melanogaster (Fruit fly), this protein is Probable G-protein coupled receptor Mth-like 5 (mthl5).